An 874-amino-acid polypeptide reads, in one-letter code: Translation initiation factor IF-2 (874 aa).

The tract at residues 1–262 (MEDKNKTIKE…EKSTSDRDFS (262 aa)) is disordered. Residues 54–63 (SKPPVMPLPL) are compositionally biased toward pro residues. Residues 83-104 (AKREESPGKQDAGRPPRDKDTR) are compositionally biased toward basic and acidic residues. A compositionally biased stretch (gly residues) spans 141 to 222 (SGGGYQGNRG…NRGPRSGGTG (82 aa)). Residues 235–244 (LSQSRGSSVT) show a composition bias toward polar residues. Residues 250 to 262 (HDKEKSTSDRDFS) are compositionally biased toward basic and acidic residues. The tr-type G domain occupies 369 to 538 (NRPPVVTIMG…LLQAEVMDLK (170 aa)). Residues 378–385 (GHVDHGKT) are G1. 378–385 (GHVDHGKT) contacts GTP. The segment at 403–407 (GITQH) is G2. The segment at 424–427 (DTPG) is G3. Residues 424–428 (DTPGH) and 478–481 (NKID) contribute to the GTP site. A G4 region spans residues 478–481 (NKID). A G5 region spans residues 514-516 (SAR).

It belongs to the TRAFAC class translation factor GTPase superfamily. Classic translation factor GTPase family. IF-2 subfamily.

Its subcellular location is the cytoplasm. One of the essential components for the initiation of protein synthesis. Protects formylmethionyl-tRNA from spontaneous hydrolysis and promotes its binding to the 30S ribosomal subunits. Also involved in the hydrolysis of GTP during the formation of the 70S ribosomal complex. In Leptospira interrogans serogroup Icterohaemorrhagiae serovar copenhageni (strain Fiocruz L1-130), this protein is Translation initiation factor IF-2.